We begin with the raw amino-acid sequence, 380 residues long: MRILADENIPVVDAFFADQGSIRRLPGRAIDRAALAEVDVLLVRSVTEVSRAALAGSPVRFVGTCTIGTDHLDLDYFAEAGIAWSSAPGCNARGVVDYVLGCLLAMAEVRGADLAERTYGVVGAGQVGGRLVEVLRGLGWKVLVCDPPRQAREPDGEFVSLERLLAEADVISLHTPLNRDGEHPTRHLLDEPRLAALRPGTWLVNASRGAVVDNQALRRLLEGGADLEVALDVWEGEPQADPELAARCLIATPHIAGYSLEGKLRGTAQIYQAYCAWRGIAERVSLQDVLPETWLAGLQLNPGCDPAWALATLCRAVYDPRSDDAAFRRSLTGDSATRRAAFDALRKHYPPRREITGLRVATGGQAELQRVVRALGAQLV.

S45 and T66 together coordinate substrate. Residues C65 and C90 are joined by a disulfide bond. NAD(+) is bound by residues 126–127 (QV), D146, T175, 206–208 (ASR), and D232. The active site involves R208. Residue E237 is part of the active site. H254 serves as the catalytic Proton donor. Residue G257 coordinates NAD(+). Residue Y258 coordinates substrate.

The protein belongs to the D-isomer specific 2-hydroxyacid dehydrogenase family. PdxB subfamily. In terms of assembly, homodimer.

The protein resides in the cytoplasm. The enzyme catalyses 4-phospho-D-erythronate + NAD(+) = (R)-3-hydroxy-2-oxo-4-phosphooxybutanoate + NADH + H(+). The protein operates within cofactor biosynthesis; pyridoxine 5'-phosphate biosynthesis; pyridoxine 5'-phosphate from D-erythrose 4-phosphate: step 2/5. In terms of biological role, catalyzes the oxidation of erythronate-4-phosphate to 3-hydroxy-2-oxo-4-phosphonooxybutanoate. This Pseudomonas aeruginosa (strain ATCC 15692 / DSM 22644 / CIP 104116 / JCM 14847 / LMG 12228 / 1C / PRS 101 / PAO1) protein is Erythronate-4-phosphate dehydrogenase.